Consider the following 216-residue polypeptide: Cyclo(L-leucyl-L-leucyl) synthase (216 aa).

Ser14 functions as the Nucleophile in the catalytic mechanism. Substrate is bound by residues Asn17, 155-159, and Tyr179; that span reads YIFDE.

Belongs to the CDPS family.

It catalyses the reaction 2 L-leucyl-tRNA(Leu) = cyclo(L-leucyl-L-leucyl) + 2 tRNA(Leu) + 2 H(+). Its function is as follows. It uses activated amino acids in the form of aminoacyl-tRNAs (aa-tRNAs) as substrates to catalyze the ATP-independent formation of cyclodipeptides which are intermediates in diketopiperazine (DKP) biosynthetic pathways. Catalyzes the formation of cyclo(L-Leu-L-Leu) (cLL) from L-leucyl-tRNA(Leu). Can incorporate various nonpolar residues, such as L-leucine and L-methionine, into cyclodipeptides. The chain is Cyclo(L-leucyl-L-leucyl) synthase from Corynebacterium jeikeium (strain K411).